Consider the following 413-residue polypeptide: Lipoyl synthase, mitochondrial (413 aa).

Residues Met-1–Tyr-33 constitute a mitochondrion transit peptide. [4Fe-4S] cluster-binding residues include Cys-133, Cys-138, Cys-144, Cys-164, Cys-168, Cys-171, and Ser-379. Positions Gly-147–Leu-368 constitute a Radical SAM core domain.

Belongs to the radical SAM superfamily. Lipoyl synthase family. [4Fe-4S] cluster is required as a cofactor.

The protein localises to the mitochondrion. The catalysed reaction is [[Fe-S] cluster scaffold protein carrying a second [4Fe-4S](2+) cluster] + N(6)-octanoyl-L-lysyl-[protein] + 2 oxidized [2Fe-2S]-[ferredoxin] + 2 S-adenosyl-L-methionine + 4 H(+) = [[Fe-S] cluster scaffold protein] + N(6)-[(R)-dihydrolipoyl]-L-lysyl-[protein] + 4 Fe(3+) + 2 hydrogen sulfide + 2 5'-deoxyadenosine + 2 L-methionine + 2 reduced [2Fe-2S]-[ferredoxin]. The protein operates within protein modification; protein lipoylation via endogenous pathway; protein N(6)-(lipoyl)lysine from octanoyl-[acyl-carrier-protein]: step 2/2. Catalyzes the radical-mediated insertion of two sulfur atoms into the C-6 and C-8 positions of the octanoyl moiety bound to the lipoyl domains of lipoate-dependent enzymes, thereby converting the octanoylated domains into lipoylated derivatives. This Emericella nidulans (strain FGSC A4 / ATCC 38163 / CBS 112.46 / NRRL 194 / M139) (Aspergillus nidulans) protein is Lipoyl synthase, mitochondrial.